A 418-amino-acid chain; its full sequence is NADH-quinone oxidoreductase subunit D (418 aa).

It belongs to the complex I 49 kDa subunit family. In terms of assembly, NDH-1 is composed of 14 different subunits. Subunits NuoB, C, D, E, F, and G constitute the peripheral sector of the complex.

It localises to the cell inner membrane. The catalysed reaction is a quinone + NADH + 5 H(+)(in) = a quinol + NAD(+) + 4 H(+)(out). In terms of biological role, NDH-1 shuttles electrons from NADH, via FMN and iron-sulfur (Fe-S) centers, to quinones in the respiratory chain. The immediate electron acceptor for the enzyme in this species is believed to be ubiquinone. Couples the redox reaction to proton translocation (for every two electrons transferred, four hydrogen ions are translocated across the cytoplasmic membrane), and thus conserves the redox energy in a proton gradient. The polypeptide is NADH-quinone oxidoreductase subunit D (Neisseria gonorrhoeae (strain ATCC 700825 / FA 1090)).